An 85-amino-acid polypeptide reads, in one-letter code: uncharacterized protein (85 aa).

This is an uncharacterized protein from Shigella flexneri.